The sequence spans 175 residues: FMRFamide-like neuropeptides 1 (175 aa).

Residues methionine 1 to alanine 21 form the signal peptide. Residues glutamate 22–lysine 68 constitute a propeptide that is removed on maturation. A Tyrosine amide modification is found at tyrosine 76. Residues serine 79–glycine 86 constitute a propeptide that is removed on maturation. Phenylalanine 98, phenylalanine 108, phenylalanine 120, phenylalanine 130, phenylalanine 142, and phenylalanine 154 each carry phenylalanine amide. A propeptide spanning residues serine 157 to serine 165 is cleaved from the precursor. A Phenylalanine amide modification is found at phenylalanine 173.

Belongs to the FARP (FMRFamide related peptide) family. Post-translationally, may be processed by convertase egl-3. In terms of tissue distribution, each flp gene is expressed in a distinct set of neurons. Flp-1 is expressed in the AVA interneurons, the M5 cholinergic pharyngeal motoneurons, and the AIA, AIY, AVE, AVK, RIG and RMG neurons.

The protein resides in the secreted. Functionally, together with flp-18, plays a homeostatic role by acting on the GABAergic neural transmission at neuromuscular junctions to prevent overexcitation of the locomotor circuit. Its function is as follows. Inhibits the activity of dissected pharyngeal myogenic muscle system. DPNFLRF-amide: Inhibits the activity of dissected pharyngeal myogenic muscle system. In terms of biological role, acts as a ligand for the npr-22 receptor in vitro. This chain is FMRFamide-like neuropeptides 1 (flp-1), found in Caenorhabditis elegans.